The following is a 344-amino-acid chain: tRNA N6-adenosine threonylcarbamoyltransferase (344 aa).

Positions 112 and 116 each coordinate Fe cation. Substrate-binding positions include 134–138 (LASGG), D167, G180, and N280. Residue D308 participates in Fe cation binding.

This sequence belongs to the KAE1 / TsaD family. Fe(2+) is required as a cofactor.

The protein resides in the cytoplasm. It carries out the reaction L-threonylcarbamoyladenylate + adenosine(37) in tRNA = N(6)-L-threonylcarbamoyladenosine(37) in tRNA + AMP + H(+). Required for the formation of a threonylcarbamoyl group on adenosine at position 37 (t(6)A37) in tRNAs that read codons beginning with adenine. Is involved in the transfer of the threonylcarbamoyl moiety of threonylcarbamoyl-AMP (TC-AMP) to the N6 group of A37, together with TsaE and TsaB. TsaD likely plays a direct catalytic role in this reaction. In Rickettsia conorii (strain ATCC VR-613 / Malish 7), this protein is tRNA N6-adenosine threonylcarbamoyltransferase.